Reading from the N-terminus, the 231-residue chain is UPF0758 protein RBAM_025090 (231 aa).

Residues 109 to 231 enclose the MPN domain; the sequence is VIRSPEDGAK…FVSLKEKGYL (123 aa). Residues His180, His182, and Asp193 each coordinate Zn(2+). The JAMM motif motif lies at 180–193; sequence HNHPSGDPTPSRED.

This sequence belongs to the UPF0758 family.

This chain is UPF0758 protein RBAM_025090, found in Bacillus velezensis (strain DSM 23117 / BGSC 10A6 / LMG 26770 / FZB42) (Bacillus amyloliquefaciens subsp. plantarum).